The chain runs to 58 residues: Protein translocase subunit SecE (58 aa).

Residues 38–58 (IVMAFVGLLAYLIQLVLAFII) form a helical membrane-spanning segment.

Belongs to the SecE/SEC61-gamma family. As to quaternary structure, component of the Sec protein translocase complex. Heterotrimer consisting of SecY (alpha), SecG (beta) and SecE (gamma) subunits. The heterotrimers can form oligomers, although 1 heterotrimer is thought to be able to translocate proteins. Interacts with the ribosome. May interact with SecDF, and other proteins may be involved.

Its subcellular location is the cell membrane. Its function is as follows. Essential subunit of the Sec protein translocation channel SecYEG. Clamps together the 2 halves of SecY. May contact the channel plug during translocation. The sequence is that of Protein translocase subunit SecE from Acidianus ambivalens (Desulfurolobus ambivalens).